The following is a 294-amino-acid chain: MAVTGTERVKRGMAEMQKGGVIMDVVNAEQAKIAEAAGAVAVMALERVPADIRAAGGVARMADPTVIEEVMKAVSIPVMAKARIGHYVEARVLEALGVDYIDESEVLTPADEEFHIDKRQFTVPFVCGCRDLGEAARRIAEGASMLRTKGEPGTGNIVEAVRHMRKVNAQVRKVVSMSEDELMTEAKNLGAPFEVLLEIKRLGRLPVVNFAAGGVATPADAALMMHLGADGVFVGSGIFKSENPEKYARAIVEATTHYEDYELIAHLSKGLGGAMKGIDISSLLPEQRMQERGW.

Aspartate 24 is a D-ribose 5-phosphate binding site. Lysine 81 serves as the catalytic Schiff-base intermediate with D-ribose 5-phosphate. Glycine 153 serves as a coordination point for D-ribose 5-phosphate. Residue arginine 165 participates in D-glyceraldehyde 3-phosphate binding. D-ribose 5-phosphate contacts are provided by residues glycine 214 and 235–236; that span reads GS.

This sequence belongs to the PdxS/SNZ family. As to quaternary structure, in the presence of PdxT, forms a dodecamer of heterodimers.

It catalyses the reaction aldehydo-D-ribose 5-phosphate + D-glyceraldehyde 3-phosphate + L-glutamine = pyridoxal 5'-phosphate + L-glutamate + phosphate + 3 H2O + H(+). Its pathway is cofactor biosynthesis; pyridoxal 5'-phosphate biosynthesis. Its function is as follows. Catalyzes the formation of pyridoxal 5'-phosphate from ribose 5-phosphate (RBP), glyceraldehyde 3-phosphate (G3P) and ammonia. The ammonia is provided by the PdxT subunit. Can also use ribulose 5-phosphate and dihydroxyacetone phosphate as substrates, resulting from enzyme-catalyzed isomerization of RBP and G3P, respectively. The sequence is that of Pyridoxal 5'-phosphate synthase subunit PdxS from Anoxybacillus flavithermus (strain DSM 21510 / WK1).